The chain runs to 382 residues: MKNAVHFGAGNIGRGFIGKLLADAEVEVTFADVDVPLVDQLSHKQEYKVKVVGTECKIDTVTHVTAVNSASEDVIDRIVKTDLVTTAVGPNVLDIIAKTIAKGIAKRFEAGNDAPLNIIACENMVRGTTHLKGEVYKHLDKSLHAKADELVGFVDSAVDRIVPPAEAANDDPLEVTVESFSEWIVDEQQFKGDIPNIAGMEKTNNLMAFVERKLFTLNTGHCITAYLGCLKGHRTIREAIEDPNIHAEVKQAMQESGEVLIRRYGFDHDMHNAYIEKILGRFANPYLVDEVDRVGRQPIRKLGANDRLVKPLLGTIEYGTENQTLLKGIAAALKYTNDTDPQAVELQTSLKEVGVTKTLAKYTGLAEDSDEVAQIETLYNQL.

Residue 4–15 coordinates NAD(+); that stretch reads AVHFGAGNIGRG.

It belongs to the mannitol dehydrogenase family.

It carries out the reaction D-mannitol 1-phosphate + NAD(+) = beta-D-fructose 6-phosphate + NADH + H(+). This is Mannitol-1-phosphate 5-dehydrogenase from Vibrio parahaemolyticus serotype O3:K6 (strain RIMD 2210633).